We begin with the raw amino-acid sequence, 234 residues long: UPF0441 protein plu3956 (234 aa).

2 disordered regions span residues 105 to 129 (QAGL…QQSG) and 149 to 234 (SAPS…SVGG). Positions 110-127 (TTTSSTSTNGEAQAQQQQ) are enriched in low complexity. The segment covering 150-175 (APSQPLFSSKSATSPANGQFVDSTGK) has biased composition (polar residues). Low complexity-rich tracts occupy residues 188-205 (TVPK…TTIT) and 216-234 (QSTM…SVGG).

It belongs to the UPF0441 family.

This is UPF0441 protein plu3956 from Photorhabdus laumondii subsp. laumondii (strain DSM 15139 / CIP 105565 / TT01) (Photorhabdus luminescens subsp. laumondii).